The following is a 245-amino-acid chain: 1-(5-phosphoribosyl)-5-[(5-phosphoribosylamino)methylideneamino] imidazole-4-carboxamide isomerase (245 aa).

Residue D7 is the Proton acceptor of the active site. The Proton donor role is filled by D129.

The protein belongs to the HisA/HisF family.

Its subcellular location is the cytoplasm. It catalyses the reaction 1-(5-phospho-beta-D-ribosyl)-5-[(5-phospho-beta-D-ribosylamino)methylideneamino]imidazole-4-carboxamide = 5-[(5-phospho-1-deoxy-D-ribulos-1-ylimino)methylamino]-1-(5-phospho-beta-D-ribosyl)imidazole-4-carboxamide. The protein operates within amino-acid biosynthesis; L-histidine biosynthesis; L-histidine from 5-phospho-alpha-D-ribose 1-diphosphate: step 4/9. The sequence is that of 1-(5-phosphoribosyl)-5-[(5-phosphoribosylamino)methylideneamino] imidazole-4-carboxamide isomerase from Escherichia fergusonii (strain ATCC 35469 / DSM 13698 / CCUG 18766 / IAM 14443 / JCM 21226 / LMG 7866 / NBRC 102419 / NCTC 12128 / CDC 0568-73).